Reading from the N-terminus, the 962-residue chain is Protease 3 (962 aa).

The first 23 residues, 1-23 (MPRSTWFKALLLFVALWAPLSQA), serve as a signal peptide directing secretion. His88 provides a ligand contact to Zn(2+). The active-site Proton acceptor is Glu91. Zn(2+)-binding residues include His92 and Glu169.

Belongs to the peptidase M16 family. In terms of assembly, monomer. Requires Zn(2+) as cofactor.

Its subcellular location is the periplasm. It catalyses the reaction Preferential cleavage of 16-Tyr-|-Leu-17 and 25-Phe-|-Tyr-26 bonds of oxidized insulin B chain. Also acts on other substrates of Mw less than 7 kDa such as insulin and glucagon.. Functionally, endopeptidase that degrades small peptides of less than 7 kDa, such as glucagon and insulin. The chain is Protease 3 (ptrA) from Shigella flexneri.